The chain runs to 354 residues: MSQLKNDRYLRALLREPVDYTPVWMMRQAGRYLPEYKATRAQAGDFMSLCRNAELACEVTLQPLRRYDLDAAILFSDILTVPDAMGLGLSFGAGEGPKFARPVENAAMVENLPIPDPETELQYVMNAVRTIRRELQGEVPLIGFSGSPWTLATYMVEGGSSKAFTKIKKMMYADPQTLHKLLDKVSDAVILYLNAQIKAGAQAVMIFDTWGGVLAHRDYPDFSLQYMQKIVAGLIRENDGRKVPITLFTKGGGLWLEQIANSGCDAVGVDWTVNLAEAKAKIGHKVALQGNMDPSVLYARPARIRQEVRSILADFGNGSGHVFNLGHGIHQDVPVENPKIFVDAVHEYSKAYHK.

Substrate-binding positions include 27–31 (RQAGR), aspartate 77, tyrosine 154, threonine 209, and histidine 327.

The protein belongs to the uroporphyrinogen decarboxylase family. Homodimer.

The protein resides in the cytoplasm. It catalyses the reaction uroporphyrinogen III + 4 H(+) = coproporphyrinogen III + 4 CO2. The protein operates within porphyrin-containing compound metabolism; protoporphyrin-IX biosynthesis; coproporphyrinogen-III from 5-aminolevulinate: step 4/4. Its function is as follows. Catalyzes the decarboxylation of four acetate groups of uroporphyrinogen-III to yield coproporphyrinogen-III. This Actinobacillus succinogenes (strain ATCC 55618 / DSM 22257 / CCUG 43843 / 130Z) protein is Uroporphyrinogen decarboxylase.